Here is a 480-residue protein sequence, read N- to C-terminus: Acetylxylan esterase (480 aa).

The N-terminal stretch at 1 to 19 is a signal peptide; that stretch reads MNRKLFMTGLLMLAMTMQA.

This sequence belongs to the AB hydrolase superfamily.

The enzyme catalyses Deacetylation of xylans and xylo-oligosaccharides.. The protein operates within glycan degradation; xylan degradation. Involved in degradation of plant cell wall polysaccharides. Is an acetyl esterase with broad substrate specificity, releasing acetic acid from acetylated xylo-oligosaccharides and acetylated xylan as well as xylose-tetraacetate, 4-O-methylumbelliferyl acetate, glucose-pentaacetate, and cephalosporin C. Appears to have greater activity on oligosaccharides than on polymeric substrates. Is also able to release acetic acid from xylo-oligosaccharides with 4-O-methylglucuronic acid side groups proximally located to O-acetyl esters. Preferentially targets xylo-oligosaccharides possessing three or more O-acetyl groups, but following their depletion it is active on the less acetylated portion of the substrate. The chain is Acetylxylan esterase from Xylanibacter ruminicola (strain ATCC 19189 / DSM 19721 / CIP 105475 / JCM 8958 / 23) (Prevotella ruminicola).